A 443-amino-acid polypeptide reads, in one-letter code: 26S proteasome regulatory subunit 4 homolog A (443 aa).

Disordered regions lie at residues 1-55 (MGQG…LPTV) and 87-108 (RLKP…LRGT). 2 stretches are compositionally biased toward basic and acidic residues: residues 12–28 (QGDR…KKFE) and 87–106 (RLKP…DDLR). ATP is bound at residue 229 to 236 (GEPGTGKT). Residues lysine 296 and lysine 433 each participate in a glycyl lysine isopeptide (Lys-Gly) (interchain with G-Cter in ubiquitin) cross-link.

It belongs to the AAA ATPase family. In terms of assembly, component of the 19S regulatory particle (RP/PA700) base subcomplex of the 26S proteasome. The 26S proteasome is composed of a core protease (CP), known as the 20S proteasome, capped at one or both ends by the 19S regulatory particle (RP/PA700). The RP/PA700 complex is composed of at least 17 different subunits in two subcomplexes, the base and the lid, which form the portions proximal and distal to the 20S proteolytic core, respectively. Required for innate immunity. Interacts with UNI. In terms of tissue distribution, preferentially expressed in the root and shoot apical meristem.

The protein resides in the cytoplasm. Its subcellular location is the P-body. The protein localises to the nucleus. In terms of biological role, the 26S protease is involved in the ATP-dependent degradation of ubiquitinated proteins. The regulatory (or ATPase) complex confers ATP dependency and substrate specificity to the 26S complex. Interacts with transit peptides of proteins targeted to the chloroplast, and may be involved in the degradation of unimported plastid protein precursors. Is required for the maintenance of postembryonic root and shoot meristems. Has a specific role in the regulation of organs size. Acts redundantly with RPT2B in the regulation of gametogenesis. With RPT2B plays a critical role in 26S proteasome assembly. Acts as an upstream signaling component for inducing both defense and morphological phenotypes in the constitutive active uni-1D mutant. Acts as a negative regulator of endoreduplication in trichome cells. May function after the completion of the third endoreduplication step (8C to 16C) mediated by RHL1. Acts as a negative regulator of transcriptional gene silencing (TGS) at specific endogenous genes through DNA methylation. Promotes post-transcriptional gene silencing (PTGS) by limiting the degradation of transgene aberrant RNAs by the RNA quality control (RQC) machinery, thus favoring their entry into cytoplasmic siRNA bodies where they can trigger PTGS. Involved in tolerance to zinc deficiency, possibly through alleviation of oxidative stresses or processing of poly-ubiquitinated proteins. Required for resistance to the fungal pathogen Golovinomyces cichoracearum. The sequence is that of 26S proteasome regulatory subunit 4 homolog A from Arabidopsis thaliana (Mouse-ear cress).